The following is a 321-amino-acid chain: o-succinylbenzoate synthase (321 aa).

The active-site Proton donor is the Lys110. Positions 138, 165, and 188 each coordinate Mg(2+). The Proton acceptor role is filled by Lys212.

It belongs to the mandelate racemase/muconate lactonizing enzyme family. MenC type 1 subfamily. A divalent metal cation is required as a cofactor.

The enzyme catalyses (1R,6R)-6-hydroxy-2-succinyl-cyclohexa-2,4-diene-1-carboxylate = 2-succinylbenzoate + H2O. The protein operates within quinol/quinone metabolism; 1,4-dihydroxy-2-naphthoate biosynthesis; 1,4-dihydroxy-2-naphthoate from chorismate: step 4/7. It participates in quinol/quinone metabolism; menaquinone biosynthesis. Converts 2-succinyl-6-hydroxy-2,4-cyclohexadiene-1-carboxylate (SHCHC) to 2-succinylbenzoate (OSB). The sequence is that of o-succinylbenzoate synthase from Mycolicibacterium smegmatis (strain ATCC 700084 / mc(2)155) (Mycobacterium smegmatis).